A 173-amino-acid polypeptide reads, in one-letter code: MEEPQRARSHTVTTTASSFAENFSTSSSSFAYDREFLRTLPGFLIVAEIVLGLLVWTLIAGTEYFRVPAFGWVMFVAVFYWVLTVFFLIIYITMTYTRIPQVPWTTVGLCFNGSAFVLYLSAAVVDASSVSPERDSHNFNSWAASSFFAFLVTICYAGNTYFSFIAWRSRTIQ.

Positions 36–168 (FLRTLPGFLI…NTYFSFIAWR (133 aa)) constitute an MARVEL domain. 4 consecutive transmembrane segments (helical) span residues 40 to 60 (LPGF…TLIA), 70 to 90 (FGWV…FLII), 105 to 125 (TTVG…AAVV), and 147 to 167 (FFAF…FIAW).

Belongs to the chemokine-like factor family. Highly expressed in liver and pancreas.

It is found in the membrane. The protein resides in the cytoplasm. Its subcellular location is the nucleus. The polypeptide is CKLF-like MARVEL transmembrane domain-containing protein 8 (CMTM8) (Homo sapiens (Human)).